A 251-amino-acid chain; its full sequence is Tyrosine transport ATP-binding protein (251 aa).

Residues 2-248 (LQIKNLSKSF…TVEEILEKFE (247 aa)) enclose the ABC transporter domain. 39 to 46 (GSNGTGKS) serves as a coordination point for ATP.

Belongs to the ABC transporter superfamily. As to quaternary structure, the complex is probably composed of two ATP-binding proteins (CDR20291_0806), two transmembrane proteins (CDR20291_0807) and a solute-binding protein (CDR20291_0805).

It localises to the cell membrane. It carries out the reaction L-tyrosine(out) + ATP + H2O = L-tyrosine(in) + ADP + phosphate + H(+). Its function is as follows. Probably part of an ABC transporter complex involved in tyrosine uptake. May also import phenylalanine. Probably responsible for energy coupling to the transport system. In Clostridioides difficile (strain R20291) (Peptoclostridium difficile), this protein is Tyrosine transport ATP-binding protein.